Consider the following 206-residue polypeptide: Probable thymidylate kinase (206 aa).

G10–S17 provides a ligand contact to ATP.

This sequence belongs to the thymidylate kinase family.

The catalysed reaction is dTMP + ATP = dTDP + ADP. In Methanosarcina acetivorans (strain ATCC 35395 / DSM 2834 / JCM 12185 / C2A), this protein is Probable thymidylate kinase.